Consider the following 99-residue polypeptide: Sec-independent protein translocase protein TatA (99 aa).

The helical transmembrane segment at 1–21 (MIGNLKPLEIVLIIAVILLLF) threads the bilayer. The tract at residues 46–99 (AMKKDDAATAAPTTETVADDTVPPQSTTARTIQAAPGDVTSSRPVSEAKPTTQS) is disordered. The span at 53–69 (ATAAPTTETVADDTVPP) shows a compositional bias: low complexity. Positions 84–99 (VTSSRPVSEAKPTTQS) are enriched in polar residues.

This sequence belongs to the TatA/E family. As to quaternary structure, the Tat system comprises two distinct complexes: a TatABC complex, containing multiple copies of TatA, TatB and TatC subunits, and a separate TatA complex, containing only TatA subunits. Substrates initially bind to the TatABC complex, which probably triggers association of the separate TatA complex to form the active translocon.

It is found in the cell membrane. Part of the twin-arginine translocation (Tat) system that transports large folded proteins containing a characteristic twin-arginine motif in their signal peptide across membranes. TatA could form the protein-conducting channel of the Tat system. In Streptomyces griseus subsp. griseus (strain JCM 4626 / CBS 651.72 / NBRC 13350 / KCC S-0626 / ISP 5235), this protein is Sec-independent protein translocase protein TatA.